We begin with the raw amino-acid sequence, 308 residues long: Acetyl-coenzyme A carboxylase carboxyl transferase subunit beta (308 aa).

The region spanning 25–294 (VWTKCTSCEQ…PLVVSVNDAP (270 aa)) is the CoA carboxyltransferase N-terminal domain. Zn(2+) is bound by residues Cys29, Cys32, Cys48, and Cys51. The segment at 29 to 51 (CTSCEQVLYYAELERNLEVCPKC) adopts a C4-type zinc-finger fold.

The protein belongs to the AccD/PCCB family. In terms of assembly, acetyl-CoA carboxylase is a heterohexamer composed of biotin carboxyl carrier protein (AccB), biotin carboxylase (AccC) and two subunits each of ACCase subunit alpha (AccA) and ACCase subunit beta (AccD). Requires Zn(2+) as cofactor.

It localises to the cytoplasm. It carries out the reaction N(6)-carboxybiotinyl-L-lysyl-[protein] + acetyl-CoA = N(6)-biotinyl-L-lysyl-[protein] + malonyl-CoA. Its pathway is lipid metabolism; malonyl-CoA biosynthesis; malonyl-CoA from acetyl-CoA: step 1/1. Component of the acetyl coenzyme A carboxylase (ACC) complex. Biotin carboxylase (BC) catalyzes the carboxylation of biotin on its carrier protein (BCCP) and then the CO(2) group is transferred by the transcarboxylase to acetyl-CoA to form malonyl-CoA. The polypeptide is Acetyl-coenzyme A carboxylase carboxyl transferase subunit beta (Vibrio cholerae serotype O1 (strain ATCC 39315 / El Tor Inaba N16961)).